A 619-amino-acid polypeptide reads, in one-letter code: Schlafen family member 12-like (619 aa).

A helical transmembrane segment spans residues 598–618 (IFLFVCLFRFCLFVCLFVFFL).

Belongs to the Schlafen family.

It is found in the membrane. In Pongo abelii (Sumatran orangutan), this protein is Schlafen family member 12-like (SLFN12L).